Consider the following 143-residue polypeptide: 3-dehydroquinate dehydratase (143 aa).

Tyrosine 22 (proton acceptor) is an active-site residue. Substrate is bound by residues asparagine 73, histidine 79, and aspartate 86. Histidine 99 (proton donor) is an active-site residue. Substrate-binding positions include 100 to 101 (LS) and arginine 110.

This sequence belongs to the type-II 3-dehydroquinase family. Homododecamer.

The enzyme catalyses 3-dehydroquinate = 3-dehydroshikimate + H2O. Its pathway is metabolic intermediate biosynthesis; chorismate biosynthesis; chorismate from D-erythrose 4-phosphate and phosphoenolpyruvate: step 3/7. Its function is as follows. Catalyzes a trans-dehydration via an enolate intermediate. The polypeptide is 3-dehydroquinate dehydratase (Salinispora tropica (strain ATCC BAA-916 / DSM 44818 / JCM 13857 / NBRC 105044 / CNB-440)).